Here is a 430-residue protein sequence, read N- to C-terminus: Serine--tRNA ligase (430 aa).

The disordered stretch occupies residues 41–60 (QSRTQDLQNERNVRSKSIGK). 236–238 (TAE) provides a ligand contact to L-serine. Residue 267-269 (RSE) coordinates ATP. Glu-290 is an L-serine binding site. Residue 354–357 (EISS) participates in ATP binding. Ser-390 contributes to the L-serine binding site.

It belongs to the class-II aminoacyl-tRNA synthetase family. Type-1 seryl-tRNA synthetase subfamily. As to quaternary structure, homodimer. The tRNA molecule binds across the dimer.

It localises to the cytoplasm. The enzyme catalyses tRNA(Ser) + L-serine + ATP = L-seryl-tRNA(Ser) + AMP + diphosphate + H(+). It carries out the reaction tRNA(Sec) + L-serine + ATP = L-seryl-tRNA(Sec) + AMP + diphosphate + H(+). Its pathway is aminoacyl-tRNA biosynthesis; selenocysteinyl-tRNA(Sec) biosynthesis; L-seryl-tRNA(Sec) from L-serine and tRNA(Sec): step 1/1. Functionally, catalyzes the attachment of serine to tRNA(Ser). Is also able to aminoacylate tRNA(Sec) with serine, to form the misacylated tRNA L-seryl-tRNA(Sec), which will be further converted into selenocysteinyl-tRNA(Sec). The protein is Serine--tRNA ligase of Alteromonas mediterranea (strain DSM 17117 / CIP 110805 / LMG 28347 / Deep ecotype).